The primary structure comprises 373 residues: UDP-N-acetylglucosamine--N-acetylmuramyl-(pentapeptide) pyrophosphoryl-undecaprenol N-acetylglucosamine transferase (373 aa).

UDP-N-acetyl-alpha-D-glucosamine contacts are provided by residues 15–17 (TGG), Asn126, Arg170, Ser198, and Gln300.

This sequence belongs to the glycosyltransferase 28 family. MurG subfamily.

Its subcellular location is the cell inner membrane. It carries out the reaction di-trans,octa-cis-undecaprenyl diphospho-N-acetyl-alpha-D-muramoyl-L-alanyl-D-glutamyl-meso-2,6-diaminopimeloyl-D-alanyl-D-alanine + UDP-N-acetyl-alpha-D-glucosamine = di-trans,octa-cis-undecaprenyl diphospho-[N-acetyl-alpha-D-glucosaminyl-(1-&gt;4)]-N-acetyl-alpha-D-muramoyl-L-alanyl-D-glutamyl-meso-2,6-diaminopimeloyl-D-alanyl-D-alanine + UDP + H(+). Its pathway is cell wall biogenesis; peptidoglycan biosynthesis. Cell wall formation. Catalyzes the transfer of a GlcNAc subunit on undecaprenyl-pyrophosphoryl-MurNAc-pentapeptide (lipid intermediate I) to form undecaprenyl-pyrophosphoryl-MurNAc-(pentapeptide)GlcNAc (lipid intermediate II). The polypeptide is UDP-N-acetylglucosamine--N-acetylmuramyl-(pentapeptide) pyrophosphoryl-undecaprenol N-acetylglucosamine transferase (Methylobacterium nodulans (strain LMG 21967 / CNCM I-2342 / ORS 2060)).